Reading from the N-terminus, the 311-residue chain is Syndecan-1 (311 aa).

The signal sequence occupies residues 1–22; sequence MRRAALWLWLCALALRLQPALP. At 23–255 the chain is on the extracellular side; sequence QIVAVNVPPE…SLLDRKEVLG (233 aa). 2 disordered regions span residues 29 to 59 and 152 to 184; these read VPPE…LSRQ and SHPH…VEGG. Acidic residues predominate over residues 32–42; that stretch reads EDQDGSGDDSD. O-linked (Xyl...) (chondroitin sulfate) serine glycosylation is present at S37. N-linked (GlcNAc...) asparagine glycosylation is present at N43. S45 and S47 each carry an O-linked (Xyl...) (heparan sulfate) serine glycan. O-linked (Xyl...) (chondroitin sulfate) serine glycosylation is found at S207 and S217. A helical membrane pass occupies residues 256-276; sequence GVIAGGLVGLIFAVCLVAFML. Topologically, residues 277-311 are cytoplasmic; it reads YRMKKKDEGSYSLEEPKQANGGAYQKPTKQEEFYA. Positions 285–311 are disordered; sequence GSYSLEEPKQANGGAYQKPTKQEEFYA. Residue S286 is modified to Phosphoserine.

Belongs to the syndecan proteoglycan family. Interacts with CDCP1. Interacts (via C-terminus) with TIAM1 (via PDZ domain). Interacts with MDK. In terms of processing, shedding is enhanced by a number of factors such as heparanase, thrombin or EGF. Also by stress and wound healing. PMA-mediated shedding is inhibited by TIMP3.

The protein localises to the membrane. It localises to the secreted. The protein resides in the extracellular exosome. In terms of biological role, cell surface proteoglycan that contains both heparan sulfate and chondroitin sulfate and that links the cytoskeleton to the interstitial matrix. Regulates exosome biogenesis in concert with SDCBP and PDCD6IP. Able to induce its own expression in dental mesenchymal cells and also in the neighboring dental epithelial cells via an MSX1-mediated pathway. The sequence is that of Syndecan-1 from Mus musculus (Mouse).